A 412-amino-acid polypeptide reads, in one-letter code: MGVLRLAVCISGVYAAFLLWAIAQERLSKPFPSVHPHPHQQPHSPSDPPPGDKFPSPLFLNFAQALASSLSALCYLSFKAWRDGWKGRGLGQLLGLKEVFGKSQTALNGDAKANKKESELNEKTKEVVEKAPKPPKKSLLALLVQVSVFQTIASPIGFLALRHISYPTMVLGKSCKLIPVLLLNVLLYRRKFSPHKYIVVALVTVGISMFMLFAETSKKKKGGSDSMWGLVLLLVNLLIDGLTNSTQDQIFSSYPSYTGQQMMFTMALTTQIILLPLLVLPLPTNPISLLAHLPPPFGSSVPTSTLSFSPPAALESISFLLSHPSALAPLFAYALLGGLGQLFIFETIQHFGSLTLVMVTVTRKLFTMLLSVVVFEHRLTKGQWLGVGVVFAGIGVEAGMKRKDVMKKAKKD.

The chain crosses the membrane as a helical span at residues 3–23; the sequence is VLRLAVCISGVYAAFLLWAIA. Residues 31 to 51 form a disordered region; that stretch reads FPSVHPHPHQQPHSPSDPPPG. The next 4 membrane-spanning stretches (helical) occupy residues 58–78, 139–159, 197–217, and 222–242; these read LFLNFAQALASSLSALCYLSF, LLALLVQVSVFQTIASPIGFL, YIVVALVTVGISMFMLFAETS, and GGSDSMWGLVLLLVNLLIDGL. Asparagine 244 is a glycosylation site (N-linked (GlcNAc...) asparagine). The next 4 helical transmembrane spans lie at 262–282, 325–345, 355–375, and 379–399; these read MMFTMALTTQIILLPLLVLPL, SALAPLFAYALLGGLGQLFIF, TLVMVTVTRKLFTMLLSVVVF, and LTKGQWLGVGVVFAGIGVEAG.

Belongs to the nucleotide-sugar transporter family. SLC35B subfamily.

Its subcellular location is the endoplasmic reticulum membrane. Functionally, may be involved in specific transport of UDP-Gal from the cytosol to the Golgi lumen. Involved in the maintenance of optimal conditions for the folding of secretory pathway proteins in the endoplasmic reticulum. The sequence is that of UDP-galactose transporter homolog 1 (HUT1-A) from Cryptococcus neoformans var. neoformans serotype D (strain JEC21 / ATCC MYA-565) (Filobasidiella neoformans).